The primary structure comprises 597 residues: MNNIRNFSIIAHIDHGKSTLADRIIQLCGGLSDREMEAQVLDSMDIERERGITIKAQTAALMYKARDGQVYNLNLIDTPGHVDFSYEVSRSLSACEGALLVVDASQGVEAQTVANCYTALDLGVEVVPVLNKIDLPSADPANAIAEIEEVIGIDASEAVHCSAKTGLGVQDVLESLITKVPPPKGDATAPLQALIVDSWFDNYVGVVMLVRVMNGTLRPKDKILLMASESQHLVESVGVFTPKSISRDTLTAGQVGFIIAGIKELKAAKVGDTVTLASRPAAEPLPGFKEVQPQVFAGLFPVEANQYDALRDSLEKLKLNDAALMYEPEVSQALGFGFRCGFLGLLHMEIVQERLEREFDMDLITTAPTVIYEVVLRDGSILMVDNPSKMPDPSKIEEIREPIVTVNLYMPQEYVGSVITLCTQKRGIQMDMSYHGKQVKLIYEMPMAEIVLDFFDKLKSTSRGYASMDYEFKEYRSSDVVKVDMLINSEKVDALAIIVHRANSQYRGRAVAAKMRELIPRQMFDVAIQAAIGANIISRENVKALRKNVLAKCYGGDISRKRKLLEKQKAGKKRMKQVGSVEIPQEAFLAILQVDDK.

Residues 2–184 (NNIRNFSIIA…SLITKVPPPK (183 aa)) enclose the tr-type G domain. GTP contacts are provided by residues 14–19 (DHGKST) and 131–134 (NKID).

The protein belongs to the TRAFAC class translation factor GTPase superfamily. Classic translation factor GTPase family. LepA subfamily.

The protein resides in the cell inner membrane. The enzyme catalyses GTP + H2O = GDP + phosphate + H(+). Required for accurate and efficient protein synthesis under certain stress conditions. May act as a fidelity factor of the translation reaction, by catalyzing a one-codon backward translocation of tRNAs on improperly translocated ribosomes. Back-translocation proceeds from a post-translocation (POST) complex to a pre-translocation (PRE) complex, thus giving elongation factor G a second chance to translocate the tRNAs correctly. Binds to ribosomes in a GTP-dependent manner. This chain is Elongation factor 4, found in Janthinobacterium sp. (strain Marseille) (Minibacterium massiliensis).